The primary structure comprises 308 residues: Porphobilinogen deaminase (308 aa).

The residue at position 243 (C243) is an S-(dipyrrolylmethanemethyl)cysteine.

Belongs to the HMBS family. Monomer. Dipyrromethane serves as cofactor.

The enzyme catalyses 4 porphobilinogen + H2O = hydroxymethylbilane + 4 NH4(+). It participates in porphyrin-containing compound metabolism; protoporphyrin-IX biosynthesis; coproporphyrinogen-III from 5-aminolevulinate: step 2/4. Its function is as follows. Tetrapolymerization of the monopyrrole PBG into the hydroxymethylbilane pre-uroporphyrinogen in several discrete steps. This chain is Porphobilinogen deaminase, found in Nitrosomonas europaea (strain ATCC 19718 / CIP 103999 / KCTC 2705 / NBRC 14298).